Here is a 142-residue protein sequence, read N- to C-terminus: Hemoglobin subunit alpha-A (142 aa).

A Globin domain is found at 2–142; that stretch reads VLSANDKTNV…VGNVLTAKYR (141 aa). His-59 is a binding site for O2. His-88 is a binding site for heme b.

This sequence belongs to the globin family. As to quaternary structure, heterotetramer of two alpha chains and two beta chains. In terms of tissue distribution, red blood cells.

Functionally, involved in oxygen transport from the lung to the various peripheral tissues. This chain is Hemoglobin subunit alpha-A (HBAA), found in Aquila chrysaetos (Golden eagle).